The primary structure comprises 330 residues: Olfactory receptor 5P70 (330 aa).

The Extracellular portion of the chain corresponds to 1-28; sequence MAFLEDGNHTIVTEFILLGLTDDPVLRD. N-linked (GlcNAc...) asparagine glycosylation is present at N8. The helical transmembrane segment at 29 to 49 threads the bilayer; sequence ILFTIILCIYLVTVSGNLSTI. Residues 50 to 57 lie on the Cytoplasmic side of the membrane; that stretch reads LLIRVSSQ. Residues 58–78 traverse the membrane as a helical segment; sequence LHHPMYFFLSHLASVDIGISS. Residues 79–102 are Extracellular-facing; it reads SVTPNMLANFLVKPNTISYIGCSI. A disulfide bridge connects residues C100 and C192. Residues 103–123 form a helical membrane-spanning segment; sequence QFTSAVFLATVECFLLAAMAY. Residues 124-136 lie on the Cytoplasmic side of the membrane; that stretch reads DRFVAICNPLLYS. A helical membrane pass occupies residues 137 to 157; it reads TKMSREACIQLVVGSYIQGLL. At 158-199 the chain is on the extracellular side; the sequence is NASFFTLSFFSLIFCGPNRINHFYCDLAPLVELSCSDVTLAV. A helical transmembrane segment spans residues 200–220; the sequence is VITSISAGFITLTTVFVIAIS. Topologically, residues 221-240 are cytoplasmic; sequence YSCIFITIMKMHSTESRYKA. Residues 241–261 form a helical membrane-spanning segment; it reads FSTCTSHLTAVTLFYGTTMFI. Residues 262–274 lie on the Extracellular side of the membrane; it reads YVMPKSSYSTDQN. The helical transmembrane segment at 275 to 295 threads the bilayer; it reads KVLSVFYMVVIPMLNPLIYSL. The Cytoplasmic portion of the chain corresponds to 296–330; that stretch reads RNNEIKGALKRYLGKKIFSYGNLFCKTHYNDTHQV.

Belongs to the G-protein coupled receptor 1 family.

Its subcellular location is the cell membrane. Potential odorant receptor. The chain is Olfactory receptor 5P70 from Mus musculus (Mouse).